Here is a 391-residue protein sequence, read N- to C-terminus: MAMISLQAMRKAQRAQGPATILAVGTANPPNLYEQDTYPDYYFRVTNSEHKQELKNKFRLMCEKTMVKRRYLYLTPEILKERPKLCSYMEPSFDDRQDIVVEEVPKLAAEAAENAIKEWGGDKSAITHLVFCSISGIDMPGADYRLAQLLGLPLAVNRLMLYSQACHMGAAMLRIAKDIAENNRSARVLVVACEITVLSFRGPDERDFQALAGQAGFGDGAGAMIVGADPVLGVERPLYHIMSATQTTVPESEKAVGGHLREVGLTFHFFNQLPAIIADNVGNSLAEAFEPIGIKDWNNIFWVAHPGNWAIMDAIETKLGLEQSKLATARHVFSEFGNMQSATVYFVMDELRKRSAAENRATTGDGLRWGVLFGFGPGISIETVVLQSVPL.

Cys166 is an active-site residue.

The protein belongs to the thiolase-like superfamily. Chalcone/stilbene synthases family. In terms of assembly, homodimer.

It carries out the reaction (E)-feruloylacetyl-CoA + (E)-feruloyl-CoA + H2O = curcumin + CO2 + 2 CoA. It functions in the pathway secondary metabolite biosynthesis; flavonoid biosynthesis. Catalyzes the synthesis of curcumin by condensing feruloyl-CoA with a diketide-CoA in the curcuminoid biosynthesis. This is Curcumin synthase 2 (CURS2) from Curcuma longa (Turmeric).